A 511-amino-acid polypeptide reads, in one-letter code: Ectonucleoside triphosphate diphosphohydrolase 1 (511 aa).

Residues 1 to 16 (MEDIKDSKVKRFCSKN) are Cytoplasmic-facing. Residues 17-37 (ILIILGFSSVLAVIALIAVGL) form a helical membrane-spanning segment. The Extracellular portion of the chain corresponds to 38–478 (THNKPLPENV…LSPPLPHSTY (441 aa)). The segment at 46–171 (NVKYGIVLDA…DFQGAKIITG (126 aa)) is N-terminal lobe. Residue asparagine 73 is glycosylated (N-linked (GlcNAc...) asparagine). A disulfide bond links cysteine 84 and cysteine 108. The Proton acceptor role is filled by glutamate 174. Residues 205 to 441 (QATFGALDLG…GTSWDQIHFM (237 aa)) form a C-terminal lobe region. N-linked (GlcNAc...) asparagine glycosylation is found at asparagine 226, asparagine 291, and asparagine 333. 2 cysteine pairs are disulfide-bonded: cysteine 254–cysteine 300 and cysteine 281–cysteine 324. A disulfide bridge connects residues cysteine 337 and cysteine 342. Residue asparagine 374 is glycosylated (N-linked (GlcNAc...) asparagine). Cysteine 391 and cysteine 414 form a disulfide bridge. Residues asparagine 429 and asparagine 458 are each glycosylated (N-linked (GlcNAc...) asparagine). The chain crosses the membrane as a helical span at residues 479 to 499 (ISLMVLFSLVLVAMVITGLFI). The Cytoplasmic segment spans residues 500 to 511 (FSKPSYFWKEAV).

This sequence belongs to the GDA1/CD39 NTPase family. As to quaternary structure, homodimer; disulfide-linked. The cofactor is Ca(2+). Mg(2+) is required as a cofactor. Post-translationally, N-glycosylated. The N-terminus is blocked. In terms of processing, palmitoylated on Cys-13; which is required for caveola targeting. As to expression, expressed in primary neurons and astrocytes, kidney, liver, muscle, thymus, lung and spleen.

It is found in the membrane. Its subcellular location is the caveola. It catalyses the reaction a ribonucleoside 5'-triphosphate + 2 H2O = a ribonucleoside 5'-phosphate + 2 phosphate + 2 H(+). The catalysed reaction is a ribonucleoside 5'-triphosphate + H2O = a ribonucleoside 5'-diphosphate + phosphate + H(+). The enzyme catalyses a ribonucleoside 5'-diphosphate + H2O = a ribonucleoside 5'-phosphate + phosphate + H(+). It carries out the reaction ATP + 2 H2O = AMP + 2 phosphate + 2 H(+). It catalyses the reaction ATP + H2O = ADP + phosphate + H(+). The catalysed reaction is ADP + H2O = AMP + phosphate + H(+). The enzyme catalyses CTP + 2 H2O = CMP + 2 phosphate + 2 H(+). It carries out the reaction CTP + H2O = CDP + phosphate + H(+). It catalyses the reaction CDP + H2O = CMP + phosphate + H(+). The catalysed reaction is GTP + 2 H2O = GMP + 2 phosphate + 2 H(+). The enzyme catalyses GTP + H2O = GDP + phosphate + H(+). It carries out the reaction GDP + H2O = GMP + phosphate + H(+). It catalyses the reaction ITP + 2 H2O = IMP + 2 phosphate + 2 H(+). The catalysed reaction is ITP + H2O = IDP + phosphate + H(+). The enzyme catalyses IDP + H2O = IMP + phosphate + H(+). It carries out the reaction UTP + 2 H2O = UMP + 2 phosphate + 2 H(+). It catalyses the reaction UTP + H2O = UDP + phosphate + H(+). The catalysed reaction is UDP + H2O = UMP + phosphate + H(+). Functionally, catalyzes the hydrolysis of both di- and triphosphate nucleotides (NDPs and NTPs) and hydrolyze NTPs to nucleotide monophosphates (NMPs) in two distinct successive phosphate-releasing steps, with NDPs as intermediates and participates in the regulation of extracellular levels of nucleotides. By hydrolyzing proinflammatory ATP and platelet-activating ADP to AMP, it blocks platelet aggregation and supports blood flow. This is Ectonucleoside triphosphate diphosphohydrolase 1 from Rattus norvegicus (Rat).